Consider the following 72-residue polypeptide: Conotoxin Ep11.1 (72 aa).

The N-terminal stretch at 1–19 is a signal peptide; sequence MKLCVTFLLILVILPSVTG. Residues 20–32 constitute a propeptide that is removed on maturation; that stretch reads EKSSKRTLSGAAL. 4 disulfides stabilise this stretch: Cys39/Cys53, Cys46/Cys58, Cys52/Cys63, and Cys57/Cys70.

This sequence belongs to the conotoxin I1 superfamily. In terms of tissue distribution, expressed by the venom duct.

It is found in the secreted. In Conus episcopatus (Bishop's cone), this protein is Conotoxin Ep11.1.